A 161-amino-acid chain; its full sequence is MNARRKKRLALATALIGGVAAIASLLLYALNSNLNLFYTPTEIVQGKKDTGVKPEVGQRIRVGGMVTVGSMVRDPNSLHVEFAVHDAAGGEVIVTYDDLLPDLFREGQGIVAQGVLIEGGKLEATEVLAKHDENYMPPEVAEAMGQSHEKLDYNAEQKSGY.

The Cytoplasmic portion of the chain corresponds to 1 to 8; the sequence is MNARRKKR. A helical; Signal-anchor for type II membrane protein transmembrane segment spans residues 9–29; the sequence is LALATALIGGVAAIASLLLYA. Residues 30-161 are Periplasmic-facing; it reads LNSNLNLFYT…DYNAEQKSGY (132 aa). Heme is bound by residues H131 and Y135.

Belongs to the CcmE/CycJ family.

It is found in the cell inner membrane. Functionally, heme chaperone required for the biogenesis of c-type cytochromes. Transiently binds heme delivered by CcmC and transfers the heme to apo-cytochromes in a process facilitated by CcmF and CcmH. The polypeptide is Cytochrome c-type biogenesis protein CcmE (Shewanella woodyi (strain ATCC 51908 / MS32)).